We begin with the raw amino-acid sequence, 145 residues long: Deoxyuridine 5'-triphosphate nucleotidohydrolase (145 aa).

Substrate-binding positions include 62–64 (RSG), Asn75, 79–81 (TVD), and Lys89.

The protein belongs to the dUTPase family. Mg(2+) is required as a cofactor.

It carries out the reaction dUTP + H2O = dUMP + diphosphate + H(+). The protein operates within pyrimidine metabolism; dUMP biosynthesis; dUMP from dCTP (dUTP route): step 2/2. Functionally, this enzyme is involved in nucleotide metabolism: it produces dUMP, the immediate precursor of thymidine nucleotides and it decreases the intracellular concentration of dUTP so that uracil cannot be incorporated into DNA. This Helicobacter pylori (strain J99 / ATCC 700824) (Campylobacter pylori J99) protein is Deoxyuridine 5'-triphosphate nucleotidohydrolase.